The sequence spans 217 residues: Peptide methionine sulfoxide reductase MsrA (217 aa).

Positions 16-39 are disordered; that stretch reads EALKGGRHPVLESPQPHTVLGTPI. Residue Cys-56 is part of the active site.

Belongs to the MsrA Met sulfoxide reductase family.

The catalysed reaction is L-methionyl-[protein] + [thioredoxin]-disulfide + H2O = L-methionyl-(S)-S-oxide-[protein] + [thioredoxin]-dithiol. It catalyses the reaction [thioredoxin]-disulfide + L-methionine + H2O = L-methionine (S)-S-oxide + [thioredoxin]-dithiol. Its function is as follows. Has an important function as a repair enzyme for proteins that have been inactivated by oxidation. Catalyzes the reversible oxidation-reduction of methionine sulfoxide in proteins to methionine. This chain is Peptide methionine sulfoxide reductase MsrA, found in Corynebacterium efficiens (strain DSM 44549 / YS-314 / AJ 12310 / JCM 11189 / NBRC 100395).